The following is a 557-amino-acid chain: uncharacterized protein (557 aa).

An N-terminal signal peptide occupies residues 1-30 (MAPRRRRHTRIAGLRVVGTATLVAATTLTA). A lipid anchor (N-palmitoyl cysteine) is attached at C31. The S-diacylglycerol cysteine moiety is linked to residue C31.

It to M.bovis Mb2616c and M.leprae ML0489.

It is found in the cell membrane. This is an uncharacterized protein from Mycobacterium tuberculosis (strain CDC 1551 / Oshkosh).